Consider the following 285-residue polypeptide: 3-methyl-2-oxobutanoate hydroxymethyltransferase (285 aa).

Positions 1-23 (MSEHNVYGAAQPAQPAQPAQPRT) are disordered. Residues 9 to 21 (AAQPAQPAQPAQP) show a composition bias toward low complexity. The Mg(2+) site is built by D66 and D105. 3-methyl-2-oxobutanoate-binding positions include 66–67 (DS), D105, and K135. Mg(2+) is bound at residue E137. Residue E203 is the Proton acceptor of the active site.

Belongs to the PanB family. As to quaternary structure, homodecamer; pentamer of dimers. The cofactor is Mg(2+).

It localises to the cytoplasm. It catalyses the reaction 3-methyl-2-oxobutanoate + (6R)-5,10-methylene-5,6,7,8-tetrahydrofolate + H2O = 2-dehydropantoate + (6S)-5,6,7,8-tetrahydrofolate. The protein operates within cofactor biosynthesis; (R)-pantothenate biosynthesis; (R)-pantoate from 3-methyl-2-oxobutanoate: step 1/2. Functionally, catalyzes the reversible reaction in which hydroxymethyl group from 5,10-methylenetetrahydrofolate is transferred onto alpha-ketoisovalerate to form ketopantoate. This Mycobacterium avium (strain 104) protein is 3-methyl-2-oxobutanoate hydroxymethyltransferase.